We begin with the raw amino-acid sequence, 254 residues long: Triosephosphate isomerase (254 aa).

Position 9–11 (N9–K11) interacts with substrate. H95 functions as the Electrophile in the catalytic mechanism. E167 serves as the catalytic Proton acceptor. Residues G173, S213, and G234 to G235 each bind substrate.

It belongs to the triosephosphate isomerase family. In terms of assembly, homodimer.

Its subcellular location is the cytoplasm. It catalyses the reaction D-glyceraldehyde 3-phosphate = dihydroxyacetone phosphate. It functions in the pathway carbohydrate biosynthesis; gluconeogenesis. It participates in carbohydrate degradation; glycolysis; D-glyceraldehyde 3-phosphate from glycerone phosphate: step 1/1. Involved in the gluconeogenesis. Catalyzes stereospecifically the conversion of dihydroxyacetone phosphate (DHAP) to D-glyceraldehyde-3-phosphate (G3P). In Roseiflexus sp. (strain RS-1), this protein is Triosephosphate isomerase.